The sequence spans 660 residues: WD repeat-containing protein 48 homolog (660 aa).

WD repeat units lie at residues 23-78 (MHRS…RDLH), 84-120 (HHTDWVNDIVLCCGVISASSDTTVKVWNAQKGFCMST), 123-162 (THRDYVRALAYARDVEMVASGGFDQLIYLWDIATLTKLTA), 174-213 (GNKDSIYSLATNPSGTVVISGSTEKVLRVFDPRACQKLMK), 216-255 (GHTDNVKAVVVNRDGTQCISASSDGTIKLWSIGQQCCISS), 258-297 (CHSESVWALQVDSNFSCVYSGGRDKRIFRTAINDFKTAQL), 300-341 (IEDA…ISVE), and 362-401 (PGAASIRQHVVLNDKRHIVTKDTDDNVAMWDVLKGRKVCD).

The protein belongs to the WD repeat WDR48 family.

Regulator of deubiquitinating complexes. Activates deubiquitination by increasing the catalytic turnover without increasing the affinity of deubiquitinating enzymes for the substrate. In Brugia malayi (Filarial nematode worm), this protein is WD repeat-containing protein 48 homolog.